Consider the following 441-residue polypeptide: Putative cytochrome P450 138 (441 aa).

Cysteine 388 serves as a coordination point for heme.

This sequence belongs to the cytochrome P450 family. Requires heme as cofactor.

This chain is Putative cytochrome P450 138 (cyp138), found in Mycobacterium bovis (strain ATCC BAA-935 / AF2122/97).